Reading from the N-terminus, the 85-residue chain is Defensin-like protein 112 (85 aa).

Residues 1–24 form the signal peptide; that stretch reads MAISKKMLTTFVLTILLAVSFVHC. Disulfide bonds link Cys40/Cys80, Cys46/Cys71, Cys56/Cys78, and Cys60/Cys79.

This sequence belongs to the DEFL family.

The protein resides in the secreted. The chain is Defensin-like protein 112 from Arabidopsis thaliana (Mouse-ear cress).